Consider the following 90-residue polypeptide: Probable acyl carrier protein (90 aa).

In terms of domain architecture, Carrier spans 9 to 90 (QVTVEELSAL…LVNGALKTGV (82 aa)). The residue at position 47 (Ser47) is an O-(pantetheine 4'-phosphoryl)serine.

Post-translationally, 4'-phosphopantetheine is transferred from CoA to a specific serine of the apo-ACP-like protein.

In terms of biological role, involved in developmentally regulated synthesis of a compound biosynthetically related to polyketide antibiotics which is essential for spore color in Streptomyces coelicolor. The chain is Probable acyl carrier protein from Streptomyces coelicolor (strain ATCC BAA-471 / A3(2) / M145).